Here is a 500-residue protein sequence, read N- to C-terminus: Tyrosine decarboxylase 2 (500 aa).

A run of 2 repeats spans residues 65 to 122 (EDIR…TELE) and 125 to 176 (VLDW…GKRS). Residues 65 to 176 (EDIRQKIVPG…KFLNRFGKRS (112 aa)) form a 2 X approximate tandem repeats region. Serine 89 provides a ligand contact to substrate. Residues alanine 153 and serine 154 each contribute to the pyridoxal 5'-phosphate site. Histidine 189 contacts substrate. Positions 248 and 302 each coordinate pyridoxal 5'-phosphate. N6-(pyridoxal phosphate)lysine is present on lysine 305.

It belongs to the group II decarboxylase family. Pyridoxal 5'-phosphate serves as cofactor. Mostly expressed in bulbs, and, to a lower extent, in stems, roots, leaves and flowers.

It carries out the reaction L-tyrosine + H(+) = tyramine + CO2. It functions in the pathway alkaloid biosynthesis. In terms of biological role, catalyzes the decarboxylation of L-tyrosine to tyramine, which is converted to norbelladine, a precursor to all Amaryllidaceae alkaloids such as galanthamine, lycorine and haemanthamine, and including haemanthamine- and crinamine-type alkaloids, promising anticancer agents. The chain is Tyrosine decarboxylase 2 from Narcissus pseudonarcissus (Daffodil).